The chain runs to 975 residues: Translation initiation factor IF-2 (975 aa).

Positions 48–63 (DHLRKSHGATDGDKRK) are enriched in basic and acidic residues. Disordered regions lie at residues 48–84 (DHLRKSHGATDGDKRKITLTRRHTSEIKQADATGKAR) and 96–388 (FVKR…QAPT). Residues 104-115 (ETGADQAQAQTD) show a composition bias toward low complexity. Residues 120 to 177 (AELKRREEEARREAELLEKQAQELRERQERLEREEAERRAREEAAEAERRRAEEEAAA) show a composition bias toward basic and acidic residues. Over residues 178-211 (KRAAAAQAEAAQQAAAAREQAQRAQSEPAEQSAQ) the composition is skewed to low complexity. Residues 212 to 263 (DEARAAAERAAQREAAKKAEDAAREAADKARAEQEEIRKRREAAEAEARAIR) show a composition bias toward basic and acidic residues. Residues 302 to 330 (KPAGEAAAARPAAKKPASGAPAPAAAPAG) show a composition bias toward low complexity. A compositionally biased stretch (gly residues) spans 359-372 (SSGGVDRGWRGGPK). A tr-type G domain is found at 475–644 (PRPPVVTVMG…LLQAEVLELK (170 aa)). The segment at 484–491 (GHVDHGKT) is G1. Residue 484 to 491 (GHVDHGKT) coordinates GTP. A G2 region spans residues 509–513 (GITQH). The tract at residues 530-533 (DTPG) is G3. GTP-binding positions include 530–534 (DTPGH) and 584–587 (NKID). Residues 584–587 (NKID) form a G4 region. The G5 stretch occupies residues 620 to 622 (SAK).

Belongs to the TRAFAC class translation factor GTPase superfamily. Classic translation factor GTPase family. IF-2 subfamily.

It is found in the cytoplasm. In terms of biological role, one of the essential components for the initiation of protein synthesis. Protects formylmethionyl-tRNA from spontaneous hydrolysis and promotes its binding to the 30S ribosomal subunits. Also involved in the hydrolysis of GTP during the formation of the 70S ribosomal complex. The chain is Translation initiation factor IF-2 from Burkholderia pseudomallei (strain 1710b).